We begin with the raw amino-acid sequence, 345 residues long: Protein RecA (345 aa).

An ATP-binding site is contributed by 65-72 (GPESSGKT).

It belongs to the RecA family.

It localises to the cytoplasm. Functionally, can catalyze the hydrolysis of ATP in the presence of single-stranded DNA, the ATP-dependent uptake of single-stranded DNA by duplex DNA, and the ATP-dependent hybridization of homologous single-stranded DNAs. It interacts with LexA causing its activation and leading to its autocatalytic cleavage. This chain is Protein RecA, found in Sulfurimonas denitrificans (strain ATCC 33889 / DSM 1251) (Thiomicrospira denitrificans (strain ATCC 33889 / DSM 1251)).